The primary structure comprises 203 residues: NADH-quinone oxidoreductase subunit C (203 aa).

Belongs to the complex I 30 kDa subunit family. In terms of assembly, NDH-1 is composed of 14 different subunits. Subunits NuoB, C, D, E, F, and G constitute the peripheral sector of the complex.

It is found in the cell inner membrane. The catalysed reaction is a quinone + NADH + 5 H(+)(in) = a quinol + NAD(+) + 4 H(+)(out). Functionally, NDH-1 shuttles electrons from NADH, via FMN and iron-sulfur (Fe-S) centers, to quinones in the respiratory chain. The immediate electron acceptor for the enzyme in this species is believed to be ubiquinone. Couples the redox reaction to proton translocation (for every two electrons transferred, four hydrogen ions are translocated across the cytoplasmic membrane), and thus conserves the redox energy in a proton gradient. The protein is NADH-quinone oxidoreductase subunit C of Bartonella tribocorum (strain CIP 105476 / IBS 506).